The following is a 168-amino-acid chain: DOMON domain-containing protein Y73F4A.2 (168 aa).

The N-terminal stretch at 1-18 is a signal peptide; it reads MFRSIAVLSALLFAFASA. A DOMON domain is found at 26–143; sequence SDFEVYWRFA…CQKWRFVKSG (118 aa). N36 is a glycosylation site (N-linked (GlcNAc...) asparagine). Positions 148–168 are disordered; it reads GQLTRNDKSPKEKKVCPMECN. Residues 152–168 are compositionally biased toward basic and acidic residues; the sequence is RNDKSPKEKKVCPMECN.

It localises to the secreted. This Caenorhabditis elegans protein is DOMON domain-containing protein Y73F4A.2.